The primary structure comprises 171 residues: 3-hydroxydecanoyl-[acyl-carrier-protein] dehydratase (171 aa).

The active site involves His-70.

Belongs to the thioester dehydratase family. FabA subfamily. In terms of assembly, homodimer.

Its subcellular location is the cytoplasm. It catalyses the reaction a (3R)-hydroxyacyl-[ACP] = a (2E)-enoyl-[ACP] + H2O. It carries out the reaction (3R)-hydroxydecanoyl-[ACP] = (2E)-decenoyl-[ACP] + H2O. The enzyme catalyses (2E)-decenoyl-[ACP] = (3Z)-decenoyl-[ACP]. Its pathway is lipid metabolism; fatty acid biosynthesis. Its function is as follows. Necessary for the introduction of cis unsaturation into fatty acids. Catalyzes the dehydration of (3R)-3-hydroxydecanoyl-ACP to E-(2)-decenoyl-ACP and then its isomerization to Z-(3)-decenoyl-ACP. Can catalyze the dehydratase reaction for beta-hydroxyacyl-ACPs with saturated chain lengths up to 16:0, being most active on intermediate chain length. The chain is 3-hydroxydecanoyl-[acyl-carrier-protein] dehydratase from Pseudomonas fluorescens (strain ATCC BAA-477 / NRRL B-23932 / Pf-5).